The sequence spans 674 residues: Protein kinase C delta type (674 aa).

The 106-residue stretch at 1–106 folds into the C2 domain; sequence MAPFLRISFN…KNNGKAEFWL (106 aa). 2 positions are modified to phosphothreonine: T43 and T50. Phosphotyrosine is present on Y64. Residue S130 is modified to Phosphoserine. Residue T141 is modified to Phosphothreonine. Y155 is modified (phosphotyrosine). A Phorbol-ester/DAG-type 1 zinc finger spans residues 158–208; that stretch reads NHEFIATFFGQPTFCSVCKEFVWGLNKQGYKCRQCNAAIHKKCIDKIIGRC. T218 is subject to Phosphothreonine. The segment at 230–280 adopts a Phorbol-ester/DAG-type 2 zinc-finger fold; that stretch reads PHRFKVYNYMSPTFCDHCGSLLWGLVKQGLKCEDCGMNVHHKCREKVANLC. The residue at position 299 (S299) is a Phosphoserine; by autocatalysis. A phosphotyrosine; by SRC mark is found at Y311 and Y332. A Protein kinase domain is found at 347–601; sequence FTFQKVLGKG…TGNIRIHPFF (255 aa). 353-361 is a binding site for ATP; that stretch reads LGKGSFGKV. Y372 bears the Phosphotyrosine mark. K376 provides a ligand contact to ATP. The residue at position 449 (T449) is a Phosphothreonine. The active-site Proton acceptor is D471. S504 is subject to Phosphoserine. A Phosphothreonine; by autocatalysis modification is found at T505. Residue Y565 is modified to Phosphotyrosine. In terms of domain architecture, AGC-kinase C-terminal spans 602–673; it reads KTINWSLLEK…VNPKFEQFLD (72 aa). 3 positions are modified to phosphoserine: S643, S652, and S662.

This sequence belongs to the protein kinase superfamily. AGC Ser/Thr protein kinase family. PKC subfamily. In terms of assembly, interacts with PDPK1 (via N-terminal region). Interacts with RAD9A. Interacts with CDCP1. Interacts with MUC1. Interacts with VASP. Interacts with CAVIN3. Interacts with PRKD2 (via N-terminus and zing-finger domain 1 and 2) in response to oxidative stress; the interaction is independent of PRKD2 tyrosine phosphorylation. Interacts with PLSC3; interaction is enhanced by UV irradiation. Autophosphorylated and/or phosphorylated at Thr-505, within the activation loop; phosphorylation at Thr-505 is not a prerequisite for enzymatic activity. Autophosphorylated at Ser-299. Upon TNFSF10/TRAIL treatment, phosphorylated at Tyr-155; phosphorylation is required for its translocation to the endoplasmic reticulum and cleavage by caspase-3. Phosphorylated at Tyr-311, Tyr-332 and Tyr-565; phosphorylation of Tyr-311 and Tyr-565 following thrombin or zymosan stimulation potentiates its kinase activity. Phosphorylated by protein kinase PDPK1; phosphorylation is inhibited by the apoptotic C-terminal cleavage product of PKN2. Phosphorylated at Tyr-311 through a SYK and SRC mechanism downstream of C-type lectin receptors activation, promoting its activation. In terms of processing, proteolytically cleaved into a catalytic subunit and a regulatory subunit by caspase-3 during apoptosis which results in kinase activation. In terms of tissue distribution, isoform 1 is highly expressed in developing pro- and pre-B-cells and moderately in mature T-cells. Isoform 2 is highly expressed in testis and ovary and at a lower level in thymocytes, brain and kidney.

It is found in the cytoplasm. The protein localises to the perinuclear region. The protein resides in the nucleus. It localises to the cell membrane. Its subcellular location is the mitochondrion. It is found in the endomembrane system. The catalysed reaction is L-seryl-[protein] + ATP = O-phospho-L-seryl-[protein] + ADP + H(+). It carries out the reaction L-threonyl-[protein] + ATP = O-phospho-L-threonyl-[protein] + ADP + H(+). It catalyses the reaction L-tyrosyl-[protein] + ATP = O-phospho-L-tyrosyl-[protein] + ADP + H(+). Novel PKCs (PRKCD, PRKCE, PRKCH and PRKCQ) are calcium-insensitive, but activated by diacylglycerol (DAG) and phosphatidylserine. Three specific sites; Thr-505 (activation loop of the kinase domain), Ser-643 (turn motif) and Ser-662 (hydrophobic region), need to be phosphorylated for its full activation. Activated by caspase-3 (CASP3) cleavage during apoptosis. After cleavage, the pseudosubstrate motif in the regulatory subunit is released from the substrate recognition site of the catalytic subunit, which enables PRKCD to become constitutively activated. The catalytic subunit which displays properties of a sphingosine-dependent protein kinase is activated by D-erythro-sphingosine (Sph) or N,N-dimethyl-D-erythrosphingosine (DMS) or N,N,N-trimethyl-D-erythrosphingosine (TMS), but not by ceramide or Sph-1-P and is strongly inhibited by phosphatidylserine. In terms of biological role, calcium-independent, phospholipid- and diacylglycerol (DAG)-dependent serine/threonine-protein kinase that plays contrasting roles in cell death and cell survival by functioning as a pro-apoptotic protein during DNA damage-induced apoptosis, but acting as an anti-apoptotic protein during cytokine receptor-initiated cell death, is involved in tumor suppression, is required for oxygen radical production by NADPH oxidase and acts as a positive or negative regulator in platelet functional responses. Negatively regulates B cell proliferation and also has an important function in self-antigen induced B cell tolerance induction. Upon DNA damage, activates the promoter of the death-promoting transcription factor BCLAF1/Btf to trigger BCLAF1-mediated p53/TP53 gene transcription and apoptosis. In response to oxidative stress, interact with and activate CHUK/IKKA in the nucleus, causing the phosphorylation of p53/TP53. In the case of ER stress or DNA damage-induced apoptosis, can form a complex with the tyrosine-protein kinase ABL1 which trigger apoptosis independently of p53/TP53. In cytosol can trigger apoptosis by activating MAPK11 or MAPK14, inhibiting AKT1 and decreasing the level of X-linked inhibitor of apoptosis protein (XIAP), whereas in nucleus induces apoptosis via the activation of MAPK8 or MAPK9. Upon ionizing radiation treatment, is required for the activation of the apoptosis regulators BAX and BAK, which trigger the mitochondrial cell death pathway. Can phosphorylate MCL1 and target it for degradation which is sufficient to trigger for BAX activation and apoptosis. Is required for the control of cell cycle progression both at G1/S and G2/M phases. Mediates phorbol 12-myristate 13-acetate (PMA)-induced inhibition of cell cycle progression at G1/S phase by up-regulating the CDK inhibitor CDKN1A/p21 and inhibiting the cyclin CCNA2 promoter activity. In response to UV irradiation can phosphorylate CDK1, which is important for the G2/M DNA damage checkpoint activation. Can protect glioma cells from the apoptosis induced by TNFSF10/TRAIL, probably by inducing increased phosphorylation and subsequent activation of AKT1. Can also act as tumor suppressor upon mitogenic stimulation with PMA or TPA. In N-formyl-methionyl-leucyl-phenylalanine (fMLP)-treated cells, is required for NCF1 (p47-phox) phosphorylation and activation of NADPH oxidase activity, and regulates TNF-elicited superoxide anion production in neutrophils, by direct phosphorylation and activation of NCF1 or indirectly through MAPK1/3 (ERK1/2) signaling pathways. Involved in antifungal immunity by mediating phosphorylation and activation of CARD9 downstream of C-type lectin receptors activation, promoting interaction between CARD9 and BCL10, followed by activation of NF-kappa-B and MAP kinase p38 pathways. May also play a role in the regulation of NADPH oxidase activity in eosinophil after stimulation with IL5, leukotriene B4 or PMA. In collagen-induced platelet aggregation, acts a negative regulator of filopodia formation and actin polymerization by interacting with and negatively regulating VASP phosphorylation. Downstream of PAR1, PAR4 and CD36/GP4 receptors, regulates differentially platelet dense granule secretion; acts as a positive regulator in PAR-mediated granule secretion, whereas it negatively regulates CD36/GP4-mediated granule release. Phosphorylates MUC1 in the C-terminal and regulates the interaction between MUC1 and beta-catenin. The catalytic subunit phosphorylates 14-3-3 proteins (YWHAB, YWHAZ and YWHAH) in a sphingosine-dependent fashion. Phosphorylates ELAVL1 in response to angiotensin-2 treatment. Phosphorylates mitochondrial phospholipid scramblase 3 (PLSCR3), resulting in increased cardiolipin expression on the mitochondrial outer membrane which facilitates apoptosis. Phosphorylates SMPD1 which induces SMPD1 secretion. The chain is Protein kinase C delta type from Mus musculus (Mouse).